A 603-amino-acid polypeptide reads, in one-letter code: Palladin (603 aa).

Residues 63–67 (FPPPP) form an interaction with VASP region. Ser133 is modified (phosphoserine). A disordered region spans residues 134 to 156 (PPTPAALLSPTKEPPPLLAKPKL). Thr136 is subject to Phosphothreonine. Residues Ser142, Ser170, Ser256, and Ser261 each carry the phosphoserine modification. One can recognise an Ig-like C2-type 1 domain in the interval 278–362 (PFFEMKLKHY…MAANTQGRVS (85 aa)). The segment at 373-402 (NQRGRSPRSPPGHPHARRPRSRSRDSGDEN) is disordered. Residues Ser378, Ser381, and Ser393 each carry the phosphoserine modification. At Ser395 the chain carries Phosphoserine; by PKB/AKT1. Ser398 carries the post-translational modification Phosphoserine. 2 consecutive Ig-like C2-type domains span residues 412 to 503 (PHFL…LVVA) and 511 to 601 (PVFI…ARLD). Interaction with EZR stretches follow at residues 414 to 503 (FLQA…LVVA) and 513 to 603 (FIEK…LDVY). A disulfide bridge connects residues Cys433 and Cys485.

Belongs to the myotilin/palladin family. Interacts with EPS8. Interacts with LASP1. Interacts with VASP. Interacts with ACTN. Interacts with SORBS2. Interacts with PFN1. Interacts with LPP. Interacts with SPIN90. Interacts with SRC. Interacts with EZR. Interacts with RAI14. In terms of processing, phosphorylated predominantly on serines and, to a lesser extent, on tyrosines. Phosphorylation at Ser-395 by PKB/AKT1 modulates cytoskeletal organization and cell motility. In terms of tissue distribution, in adult central nervous system is detected in the brain and spinal cord, specially in the olfactory bulb, cerebral and cerebellar cortices, hippocampus, amygdala, superior colluculus, and superficial laminae of the spinal dorsal horn.

It is found in the cytoplasm. It localises to the cytoskeleton. The protein localises to the cell junction. Its subcellular location is the focal adhesion. The protein resides in the myofibril. It is found in the sarcomere. It localises to the z line. The protein localises to the cell projection. Its subcellular location is the ruffle. The protein resides in the podosome. It is found in the lamellipodium. It localises to the axon. The protein localises to the growth cone. Cytoskeletal protein required for organization of normal actin cytoskeleton. Roles in establishing cell morphology, motility, cell adhesion and cell-extracellular matrix interactions in a variety of cell types. May function as a scaffolding molecule with the potential to influence both actin polymerization and the assembly of existing actin filaments into higher-order arrays. Binds to proteins that bind to either monomeric or filamentous actin. Localizes at sites where active actin remodeling takes place, such as lamellipodia and membrane ruffles. Different isoforms may have functional differences. Plays a role in neurite outgrowth and in the establishment of polarity during neuronal morphogenesis. Participates in the acquisition of the reactive astrocyte morphology. The protein is Palladin (Palld) of Rattus norvegicus (Rat).